The following is a 224-amino-acid chain: MGQKGCPIGFRTAVTKKWRSLWYGNNQEFGKFLIEDVKIREFLKKKPSCQGAAGFVVKRMSGKIEVTIHTARPGLVIGKKGAEVESLKAELKKLTDKDVWVEIAEVKRPELNAQLVADGIAKQIERRVSFRRAMKKALQSVMDAGALGVKVQVSGRLAGAEIARSEWYKNGRVPLHTLRADIDYATASAETTYGIIGIKVWINLGEKKAVPAANHAGAASTAAA.

In terms of domain architecture, KH type-2 spans 39–107; sequence IREFLKKKPS…DVWVEIAEVK (69 aa).

The protein belongs to the universal ribosomal protein uS3 family. As to quaternary structure, part of the 30S ribosomal subunit. Forms a tight complex with proteins S10 and S14.

In terms of biological role, binds the lower part of the 30S subunit head. Binds mRNA in the 70S ribosome, positioning it for translation. The polypeptide is Small ribosomal subunit protein uS3 (Chlamydia trachomatis serovar D (strain ATCC VR-885 / DSM 19411 / UW-3/Cx)).